The primary structure comprises 51 residues: Large ribosomal subunit protein eL39 (51 aa).

Belongs to the eukaryotic ribosomal protein eL39 family.

In Saccharolobus islandicus (strain L.S.2.15 / Lassen #1) (Sulfolobus islandicus), this protein is Large ribosomal subunit protein eL39.